The following is a 645-amino-acid chain: Synaptotagmin-16 (645 aa).

3 disordered regions span residues 102–121 (AQNSSPSLSQHAKDSCSTMS), 144–192 (EHHL…DSDE), and 206–344 (QSFR…PSGV). Over residues 167 to 177 (ETVNGKKQVNS) the composition is skewed to polar residues. Residues 179–192 (GDDEELSTSSDSDE) are compositionally biased toward acidic residues. Residues 287–303 (HQESSVVQSLRRQSTEG) show a composition bias toward polar residues. The C2 1 domain maps to 350 to 469 (KCGDLDVIFE…HPEGEMKVTL (120 aa)). The disordered stretch occupies residues 478-503 (SSGGSPLSPSAVSHSDSTSSTQSLSH). Residues 485 to 502 (SPSAVSHSDSTSSTQSLS) show a composition bias toward low complexity. Residues 505–640 (GAPELLVGLS…TKGQQICRWH (136 aa)) enclose the C2 2 domain.

It belongs to the synaptotagmin family. Homodimer. Can also form heterodimers. Expressed in brain.

Its function is as follows. May be involved in the trafficking and exocytosis of secretory vesicles in non-neuronal tissues. Is Ca(2+)-independent. This Homo sapiens (Human) protein is Synaptotagmin-16 (SYT16).